A 384-amino-acid chain; its full sequence is Ribosomal RNA large subunit methyltransferase G (384 aa).

Belongs to the methyltransferase superfamily. RlmG family.

It localises to the cytoplasm. It catalyses the reaction guanosine(1835) in 23S rRNA + S-adenosyl-L-methionine = N(2)-methylguanosine(1835) in 23S rRNA + S-adenosyl-L-homocysteine + H(+). In terms of biological role, specifically methylates the guanine in position 1835 (m2G1835) of 23S rRNA. The protein is Ribosomal RNA large subunit methyltransferase G of Streptomyces griseus subsp. griseus (strain JCM 4626 / CBS 651.72 / NBRC 13350 / KCC S-0626 / ISP 5235).